The sequence spans 219 residues: MEDYKLLQLETATVDAQAPPLPTKTVPVFAPPLSTPPQPNELVYTKRRRTKRKAKCRCLFFTMGMFALGVLMTTAILVSTFILTVPIGALRTAPCPAETFGLGDECVRPVLLNASSNTRNISGVGAVCEEYSEMAASNGTAGLIMSLLDCLNVGDSESVMNKLNLDDTQLAYCNVPSFAECYTKGFGVCYAARPLSPLGELIYKARQALRLDHIIPFPR.

Topologically, residues 1–57 (MEDYKLLQLETATVDAQAPPLPTKTVPVFAPPLSTPPQPNELVYTKRRRTKRKAKCR) are intravirion. A helical; Signal-anchor for type II membrane protein membrane pass occupies residues 58-78 (CLFFTMGMFALGVLMTTAILV). The Virion surface portion of the chain corresponds to 79-219 (STFILTVPIG…RLDHIIPFPR (141 aa)). N-linked (GlcNAc...) asparagine; by host glycans are attached at residues asparagine 113, asparagine 120, and asparagine 138.

It belongs to the herpesviridae HHV-1 UL45 family. Post-translationally, N-glycosylated.

Its subcellular location is the virion membrane. The protein is Envelope protein UL45 homolog of Equine herpesvirus 1 (strain Ab4p) (EHV-1).